A 701-amino-acid chain; its full sequence is Elongation factor G 1 (701 aa).

The tr-type G domain occupies 5-281 (SKYRNIGIFA…AVVDYLPSPT (277 aa)). Residues 14 to 21 (AHVDAGKT), 78 to 82 (DTPGH), and 132 to 135 (NKLD) contribute to the GTP site.

It belongs to the TRAFAC class translation factor GTPase superfamily. Classic translation factor GTPase family. EF-G/EF-2 subfamily.

It is found in the cytoplasm. Functionally, catalyzes the GTP-dependent ribosomal translocation step during translation elongation. During this step, the ribosome changes from the pre-translocational (PRE) to the post-translocational (POST) state as the newly formed A-site-bound peptidyl-tRNA and P-site-bound deacylated tRNA move to the P and E sites, respectively. Catalyzes the coordinated movement of the two tRNA molecules, the mRNA and conformational changes in the ribosome. The chain is Elongation factor G 1 from Colwellia psychrerythraea (strain 34H / ATCC BAA-681) (Vibrio psychroerythus).